Reading from the N-terminus, the 252-residue chain is Ribosomal RNA small subunit methyltransferase J (252 aa).

Residues 104–105 (RD), 120–121 (ER), 156–157 (SS), and D174 each bind S-adenosyl-L-methionine.

It belongs to the methyltransferase superfamily. RsmJ family.

It localises to the cytoplasm. It carries out the reaction guanosine(1516) in 16S rRNA + S-adenosyl-L-methionine = N(2)-methylguanosine(1516) in 16S rRNA + S-adenosyl-L-homocysteine + H(+). Functionally, specifically methylates the guanosine in position 1516 of 16S rRNA. The sequence is that of Ribosomal RNA small subunit methyltransferase J from Yersinia enterocolitica serotype O:8 / biotype 1B (strain NCTC 13174 / 8081).